A 411-amino-acid polypeptide reads, in one-letter code: Protein translocase subunit SecY (411 aa).

10 consecutive transmembrane segments (helical) span residues 13 to 33, 52 to 72, 111 to 131, 135 to 155, 163 to 180, 197 to 217, 252 to 272, 291 to 311, 350 to 370, and 377 to 397; these read FTLL…PGID, IFSG…VPYI, ALGW…PYVF, FTFV…IMWL, GIGN…VSGL, SIKF…TIFV, GVMP…LTQL, LYLV…TSIV, FLGA…EKVA, and GLGA…AKQI.

It belongs to the SecY/SEC61-alpha family. In terms of assembly, component of the plastid Sec protein translocase complex, which is composed of at least SecY, SecE and SecG.

The protein resides in the plastid. It localises to the chloroplast thylakoid membrane. Functionally, the central subunit of the protein translocation channel SecYE. Consists of two halves formed by TMs 1-5 and 6-10. These two domains form a lateral gate at the front which open onto the bilayer between TMs 2 and 7, and are clamped together by SecE at the back. The channel is closed by both a pore ring composed of hydrophobic SecY resides and a short helix (helix 2A) on the extracellular side of the membrane which forms a plug. This Porphyra purpurea (Red seaweed) protein is Protein translocase subunit SecY.